Here is a 171-residue protein sequence, read N- to C-terminus: Histone H1, gonadal (171 aa).

Disordered regions lie at residues 1-40 (AASPQKRAASPRKSPKKSPRKSPKKKSPRKRKARSAAHPP) and 133-171 (AKAKKAKAAARRKAAAAKRKAAAAKRRAAKKARKAKAKP). A compositionally biased stretch (basic residues) spans 9-35 (ASPRKSPKKSPRKSPKKKSPRKRKARS). In terms of domain architecture, H15 spans 37–111 (AHPPVIDMIT…GATGRFRVGA (75 aa)).

This sequence belongs to the histone H1/H5 family. Sperm.

Its subcellular location is the nucleus. The protein resides in the chromosome. Histones H1 are necessary for the condensation of nucleosome chains into higher-order structures. This is Histone H1, gonadal from Echinolampas crassa (Sea urchin).